The following is a 473-amino-acid chain: ATP synthase subunit beta, chloroplastic (473 aa).

An ATP-binding site is contributed by 172 to 179; that stretch reads GGAGVGKT.

Belongs to the ATPase alpha/beta chains family. As to quaternary structure, F-type ATPases have 2 components, CF(1) - the catalytic core - and CF(0) - the membrane proton channel. CF(1) has five subunits: alpha(3), beta(3), gamma(1), delta(1), epsilon(1). CF(0) has four main subunits: a(1), b(1), b'(1) and c(9-12).

Its subcellular location is the plastid. The protein resides in the chloroplast thylakoid membrane. The catalysed reaction is ATP + H2O + 4 H(+)(in) = ADP + phosphate + 5 H(+)(out). Its function is as follows. Produces ATP from ADP in the presence of a proton gradient across the membrane. The catalytic sites are hosted primarily by the beta subunits. The polypeptide is ATP synthase subunit beta, chloroplastic (Pteridium esculentum (Bracken fern)).